The primary structure comprises 148 residues: Deoxyuridine 5'-triphosphate nucleotidohydrolase (148 aa).

Residues 65–67 (RSG), asparagine 78, 82–84 (TID), and lysine 92 each bind substrate.

The protein belongs to the dUTPase family. Mg(2+) is required as a cofactor.

The catalysed reaction is dUTP + H2O = dUMP + diphosphate + H(+). It functions in the pathway pyrimidine metabolism; dUMP biosynthesis; dUMP from dCTP (dUTP route): step 2/2. Its function is as follows. This enzyme is involved in nucleotide metabolism: it produces dUMP, the immediate precursor of thymidine nucleotides and it decreases the intracellular concentration of dUTP so that uracil cannot be incorporated into DNA. This Chlorobium luteolum (strain DSM 273 / BCRC 81028 / 2530) (Pelodictyon luteolum) protein is Deoxyuridine 5'-triphosphate nucleotidohydrolase.